Reading from the N-terminus, the 255-residue chain is Small ribosomal subunit protein eS1 (255 aa).

Basic residues predominate over residues 1–18 (MAVGKNKRLSKGKKGLKK). A disordered region spans residues 1–28 (MAVGKNKRLSKGKKGLKKRTQDPFSRKD). Position 2 is an N-acetylalanine; partial (alanine 2). Positions 19–28 (RTQDPFSRKD) are enriched in basic and acidic residues.

Belongs to the eukaryotic ribosomal protein eS1 family. As to quaternary structure, component of the small ribosomal subunit. Mature ribosomes consist of a small (40S) and a large (60S) subunit. The 40S subunit contains about 33 different proteins and 1 molecule of RNA (18S). The 60S subunit contains about 49 different proteins and 3 molecules of RNA (25S, 5.8S and 5S).

It localises to the cytoplasm. The protein is Small ribosomal subunit protein eS1 of Ajellomyces capsulatus (strain H143) (Darling's disease fungus).